The chain runs to 882 residues: Alanine--tRNA ligase (882 aa).

4 residues coordinate Zn(2+): His570, His574, Cys672, and His676.

This sequence belongs to the class-II aminoacyl-tRNA synthetase family. Zn(2+) serves as cofactor.

It is found in the cytoplasm. It catalyses the reaction tRNA(Ala) + L-alanine + ATP = L-alanyl-tRNA(Ala) + AMP + diphosphate. Functionally, catalyzes the attachment of alanine to tRNA(Ala) in a two-step reaction: alanine is first activated by ATP to form Ala-AMP and then transferred to the acceptor end of tRNA(Ala). Also edits incorrectly charged Ser-tRNA(Ala) and Gly-tRNA(Ala) via its editing domain. The protein is Alanine--tRNA ligase of Xanthomonas euvesicatoria pv. vesicatoria (strain 85-10) (Xanthomonas campestris pv. vesicatoria).